The primary structure comprises 151 residues: U1 small nuclear ribonucleoprotein C (151 aa).

The segment at 4–36 (YYCDYCDTYLTHDSPSVRKTHCTGRKHKDNVKF) adopts a Matrin-type zinc-finger fold.

The protein belongs to the U1 small nuclear ribonucleoprotein C family. As to quaternary structure, U1 snRNP is composed of the 7 core Sm proteins B/B', D1, D2, D3, E, F and G that assemble in a heptameric protein ring on the Sm site of the small nuclear RNA to form the core snRNP, and at least 3 U1 snRNP-specific proteins U1-70K, U1-A and U1-C. U1-C interacts with U1 snRNA and the 5' splice-site region of the pre-mRNA.

Its subcellular location is the nucleus. Its function is as follows. Component of the spliceosomal U1 snRNP, which is essential for recognition of the pre-mRNA 5' splice-site and the subsequent assembly of the spliceosome. U1-C is directly involved in initial 5' splice-site recognition for both constitutive and regulated alternative splicing. The interaction with the 5' splice-site seems to precede base-pairing between the pre-mRNA and the U1 snRNA. Stimulates commitment or early (E) complex formation by stabilizing the base pairing of the 5' end of the U1 snRNA and the 5' splice-site region. This is U1 small nuclear ribonucleoprotein C from Anopheles darlingi (Mosquito).